Reading from the N-terminus, the 401-residue chain is Multidrug resistance protein MdtH (401 aa).

Over 1–12 (MSRVSQARNLGK) the chain is Cytoplasmic. Residues 13–33 (YFLLIDNMLVVLGFFVVFPLV) form a helical membrane-spanning segment. Residues 34–98 (SIRFVDQMGW…GFATMGIAHE (65 aa)) are Periplasmic-facing. Residues 99–116 (PWLLWFSCLLSGLGGTLF) form a helical membrane-spanning segment. Residues 117–137 (DPPRSALVVKLMPQQRGRFFS) lie on the Cytoplasmic side of the membrane. Residues 138–158 (LLMMQDSAGAVIGALLGSWLL) traverse the membrane as a helical segment. Residues 159–163 (QYDFR) lie on the Periplasmic side of the membrane. A helical membrane pass occupies residues 164-184 (LVCATGAVLFVLCAAFNAWLL). The Cytoplasmic portion of the chain corresponds to 185–212 (PAWKLSTIRTPVREGMTRVMRDKRFVTY). The helical transmembrane segment at 213–233 (VLTLAGYYMLAVQVMLMLPIM) threads the bilayer. The Periplasmic segment spans residues 234–242 (VNDVAGAPS). A helical membrane pass occupies residues 243 to 263 (AVKWMYAIEACLSLTLLYPIA). Residues 264 to 275 (RWSEKHFRLEHR) lie on the Cytoplasmic side of the membrane. Residues 276 to 296 (LMAGLLIMSLSMMPVGMVSGL) traverse the membrane as a helical segment. Topologically, residues 297-298 (QQ) are periplasmic. The chain crosses the membrane as a helical span at residues 299–319 (LFTLICLFYIGSIIAEPARET). Residues 320–338 (LSASLADARARGSYMGFSR) are Cytoplasmic-facing. The helical transmembrane segment at 339–359 (LGLAIGGTIGYIGGGWLFDLG) threads the bilayer. Residues 360-366 (KSAHQPE) are Periplasmic-facing. A helical membrane pass occupies residues 367 to 387 (LPWMMLGIIGIFTFLALGWQF). At 388-401 (SQKRAARRLLERDA) the chain is on the cytoplasmic side.

Belongs to the major facilitator superfamily. DHA1 family. MdtH (TC 2.A.1.2.21) subfamily.

The protein resides in the cell inner membrane. In Shigella dysenteriae serotype 1 (strain Sd197), this protein is Multidrug resistance protein MdtH.